We begin with the raw amino-acid sequence, 308 residues long: Ribonuclease Z (308 aa).

Positions 60, 62, 64, 65, 140, 209, and 269 each coordinate Zn(2+). Asp-64 acts as the Proton acceptor in catalysis.

The protein belongs to the RNase Z family. As to quaternary structure, homodimer. It depends on Zn(2+) as a cofactor.

The enzyme catalyses Endonucleolytic cleavage of RNA, removing extra 3' nucleotides from tRNA precursor, generating 3' termini of tRNAs. A 3'-hydroxy group is left at the tRNA terminus and a 5'-phosphoryl group is left at the trailer molecule.. Its function is as follows. Zinc phosphodiesterase, which displays some tRNA 3'-processing endonuclease activity. Probably involved in tRNA maturation, by removing a 3'-trailer from precursor tRNA. The polypeptide is Ribonuclease Z (Methanococcus maripaludis (strain C6 / ATCC BAA-1332)).